A 348-amino-acid chain; its full sequence is Dihydroorotase (348 aa).

Positions 17 and 19 each coordinate Zn(2+). Residues 19–21 (HLR) and N45 contribute to the substrate site. 3 residues coordinate Zn(2+): K103, H140, and H178. K103 is subject to N6-carboxylysine. H140 is a binding site for substrate. Residue L223 participates in substrate binding. D251 provides a ligand contact to Zn(2+). D251 is an active-site residue. Substrate contacts are provided by H255 and A267.

The protein belongs to the metallo-dependent hydrolases superfamily. DHOase family. Class II DHOase subfamily. In terms of assembly, homodimer. Zn(2+) is required as a cofactor.

It carries out the reaction (S)-dihydroorotate + H2O = N-carbamoyl-L-aspartate + H(+). Its pathway is pyrimidine metabolism; UMP biosynthesis via de novo pathway; (S)-dihydroorotate from bicarbonate: step 3/3. Its function is as follows. Catalyzes the reversible cyclization of carbamoyl aspartate to dihydroorotate. The polypeptide is Dihydroorotase (Cronobacter sakazakii (strain ATCC BAA-894) (Enterobacter sakazakii)).